A 155-amino-acid polypeptide reads, in one-letter code: MSRRGPAEKKTVKRDPFYRNRVVNMLINRILKHGKKSLAYKILYRAMKKIQQKKKRNPLSILRQAIRRVTPKIAVKRRRVSGSAYQVPIEIKAPQGKVLAIRWLLEAARKRPGRNMAFKLSSELMDATKGKGNAIRKKEETYRMAEANRTFANFR.

It belongs to the universal ribosomal protein uS7 family. In terms of assembly, part of the 30S ribosomal subunit.

It localises to the plastid. Its subcellular location is the chloroplast. In terms of biological role, one of the primary rRNA binding proteins, it binds directly to 16S rRNA where it nucleates assembly of the head domain of the 30S subunit. In Pelargonium hortorum (Common geranium), this protein is Small ribosomal subunit protein uS7cz/uS7cy (rps7-A).